Here is a 303-residue protein sequence, read N- to C-terminus: Acetylxylan esterase A (303 aa).

Residues 1-23 (MLSTHLLFLATTLLTSLFHPIAA) form the signal peptide. The active-site Charge relay system is the Ser-147. Asn-189 is a glycosylation site (N-linked (GlcNAc...) asparagine).

Belongs to the carbohydrate esterase 1 (CE1) family. AxeA subfamily. As to quaternary structure, monomer. Post-translationally, glycosylated.

The protein localises to the secreted. The enzyme catalyses Deacetylation of xylans and xylo-oligosaccharides.. It functions in the pathway glycan degradation; xylan degradation. In terms of biological role, acetylxylan esterase involved in the hydrolysis of xylan, a major structural heterogeneous polysaccharide found in plant biomass representing the second most abundant polysaccharide in the biosphere, after cellulose. Degrades acetylated xylans by cleaving acetyl side groups from the hetero-xylan backbone. The protein is Acetylxylan esterase A (axeA) of Aspergillus ficuum.